We begin with the raw amino-acid sequence, 701 residues long: Ubiquitin thioesterase zranb1 (701 aa).

The segment at 3–33 adopts a RanBP2-type 1 zinc-finger fold; the sequence is EHGIKWACEYCTYENWPSAIKCTMCRAPRPS. Residues cysteine 10, cysteine 13, cysteine 24, and cysteine 27 each contribute to the Zn(2+) site. The disordered stretch occupies residues 38–59; the sequence is TEEPFKNSTPDVGSMERESGSP. The segment at 79–108 adopts a RanBP2-type 2 zinc-finger fold; sequence TSTKWSCHMCTYLNWPRAIRCTQCLSQRRT. Zn(2+) contacts are provided by cysteine 85, cysteine 88, cysteine 99, and cysteine 102. The segment at 108–129 is disordered; it reads TRSPTESPQSSGSSLRAIPSPI. Low complexity predominate over residues 111-121; it reads PTESPQSSGSS. Residues 143-173 form a RanBP2-type 3 zinc finger; sequence IKGQHWTCSACTYENCAKAKKCVVCDHPTPN. Zn(2+)-binding residues include cysteine 150, cysteine 153, cysteine 164, and cysteine 167. The segment at 198 to 220 is disordered; sequence WRGGCSSSNSQRRSPPTSKRDSD. The span at 202 to 214 shows a compositional bias: polar residues; sequence CSSSNSQRRSPPT. 2 ANK repeats span residues 253–283 and 306–333; these read RKTD…SGGD and YTLV…QHAA. Positions 425 to 585 constitute an OTU domain; sequence LYALWNRTAG…RGHFSALVAM (161 aa). The active-site Nucleophile is the cysteine 436. The active-site Proton acceptor is the histidine 578.

This sequence belongs to the peptidase C64 family.

Its subcellular location is the cytoplasm. The protein resides in the nucleus. It carries out the reaction Thiol-dependent hydrolysis of ester, thioester, amide, peptide and isopeptide bonds formed by the C-terminal Gly of ubiquitin (a 76-residue protein attached to proteins as an intracellular targeting signal).. Its function is as follows. Ubiquitin thioesterase, which specifically hydrolyzes 'Lys-29'-linked and 'Lys-33'-linked diubiquitin. Also cleaves 'Lys-63'-linked chains, but with 40-fold less efficiency compared to 'Lys-29'-linked ones. Positive regulator of the Wnt signaling pathway that deubiquitinates apc protein, a negative regulator of Wnt-mediated transcription. Acts as a regulator of autophagy by mediating deubiquitination of pik3c3/vps34, thereby promoting autophagosome maturation. Plays a role in the regulation of cell morphology and cytoskeletal organization. Required in the stress fiber dynamics and cell migration. In Xenopus tropicalis (Western clawed frog), this protein is Ubiquitin thioesterase zranb1 (zranb1).